Here is a 1497-residue protein sequence, read N- to C-terminus: Collagen alpha-2(V) chain (1497 aa).

The first 26 residues, 1 to 26 (MMANWVGARPLLILSVLLGYCVSIKA), serve as a signal peptide directing secretion. The VWFC domain maps to 38–96 (IACTQHGQMYLNRDIWKPSPCQICVCDNGAILCDKIECPEVLNCANPITPTGECCPVCP). Residues 103-1265 (TSFGRGRKGQ…PDDTNKTDPG (1163 aa)) form a disordered region. The Cell attachment site signature appears at 141 to 143 (RGD). The span at 155 to 164 (PQGIDGEPGV) shows a compositional bias: low complexity. Residues 168 to 180 (PGAPGPPGHPSHP) show a composition bias toward pro residues. The span at 210-225 (PGSVGPVGPRGPQGLQ) shows a compositional bias: low complexity. The span at 234–246 (AGPPGEPGEPGPM) shows a compositional bias: pro residues. 4-hydroxyproline occurs at positions 288, 291, and 294. 2 stretches are compositionally biased toward low complexity: residues 320 to 338 (EAGPTGPMGAMGPLGPRGM) and 425 to 441 (TPGAKGPTGSAGTSGPP). The Cell attachment site signature appears at 504 to 506 (RGD). Residues 550-559 (GPKGGQGDPG) are compositionally biased toward gly residues. Positions 602–611 (SIGIRGQPGS) are enriched in low complexity. Pro-609 and Pro-615 each carry 4-hydroxyproline. Residues 708–719 (RGERGNPGERGE) are compositionally biased toward basic and acidic residues. A compositionally biased stretch (gly residues) spans 730-739 (GMAGGHGPDG). Positions 744-756 (PGPTGTIGDTGPP) are enriched in low complexity. The segment covering 774-785 (KGDRGGIGEKGA) has biased composition (basic and acidic residues). Low complexity-rich tracts occupy residues 824–839 (PPGSRGNPGSRGENGP) and 878–891 (LAGSPGPHGPHGVP). Positions 892–901 (GLKGGRGTQG) are enriched in gly residues. Over residues 917-927 (PPGPAGAPGPA) the composition is skewed to pro residues. 3 consecutive short sequence motifs (cell attachment site) follow at residues 942-944 (RGD), 1065-1067 (RGD), and 1068-1070 (RGD). Basic and acidic residues predominate over residues 1061–1070 (AVGERGDRGD). A compositionally biased stretch (low complexity) spans 1091-1112 (APGDAGQRGEPGSRGPVGPPGR). 2 consecutive short sequence motifs (cell attachment site) follow at residues 1125 to 1127 (RGD) and 1134 to 1136 (RGD). The segment covering 1125 to 1139 (RGDKGDNGDRGDRGQ) has biased composition (basic and acidic residues). Composition is skewed to pro residues over residues 1169-1179 (PFGPRGPPGPV) and 1209-1224 (EGPPGEPGPPGPPGPP). The propeptide at 1228–1497 (TAALGDIMGH…GLDIGPVCFM (270 aa)) is C-terminal propeptide. A glycan (N-linked (GlcNAc...) asparagine) is linked at Asn-1260. The Fibrillar collagen NC1 domain maps to 1264-1497 (PGIHVTLKSL…GLDIGPVCFM (234 aa)). 3 disulfide bridges follow: Cys-1294–Cys-1326, Cys-1334–Cys-1495, and Cys-1403–Cys-1448. Ca(2+)-binding residues include Asp-1312, Asn-1314, Gln-1315, and Asp-1320. An N-linked (GlcNAc...) asparagine glycan is attached at Asn-1398.

Belongs to the fibrillar collagen family. As to quaternary structure, trimers of two alpha 1(V) and one alpha 2(V) chains expressed in most tissues and trimers of one alpha 1(V), one alpha 2(V), and one alpha 3(V) chains with a more limited distribution of expression. Post-translationally, prolines at the third position of the tripeptide repeating unit (G-X-P) are hydroxylated in some or all of the chains. Probably 3-hydroxylated on prolines by LEPREL1. Hydroxylation on proline residues within the sequence motif, GXPG, is most likely to be 4-hydroxy as this fits the requirement for 4-hydroxylation in vertebrates.

The protein localises to the secreted. It localises to the extracellular space. The protein resides in the extracellular matrix. In terms of biological role, type V collagen is a member of group I collagen (fibrillar forming collagen). It is a minor connective tissue component of nearly ubiquitous distribution. Type V collagen binds to DNA, heparan sulfate, thrombospondin, heparin, and insulin. Type V collagen is a key determinant in the assembly of tissue-specific matrices. The protein is Collagen alpha-2(V) chain of Mus musculus (Mouse).